The chain runs to 707 residues: MEIEEIKVQTEVNGAPFIIETGYFAKQANGAVIVRQGDTAVLVAAVMSEEPQADIDFLPLTVEYREKYYAYGKIPGGFVKREGKPTDREILVARNIDRPIRPLFPKGFYNDIVITAYTLSADDKYDPDVLGIVGASAALHISDIPFEGPIAGVRVCRVNGEFIVNPTYQQKAQADIEIVVAGSKDAIVMVEGGAKEVPEEDILEAMMFGHQEIKKLIELQEELRLKCGKEKIQVAIDEEEIILKDKLKEFSYEKIKEAFKITDKKQRNKTINAIFEEAFKTLEIPEEKIKKASFIYKDIVSNVMRDNILNEGIRIDGRKPEEIRPIWIKVGVFPRNHGSAIFTRGQTQAFVTVTLGSLSEGQIEESIEAGEVMKRFMLHYNFPPFSTGEAKPPRATSRREIGHGNLAERALEPLIPPEEEFPYAIRVVSDILESNGSTSMATVCGGSLALFDAGVPMKKHVAGIAMGLIKAEDKFVILSDILGDEDHLGDMDFKVAGTRDGVTSIQMDIKVKGLTKEILEKALQQARDGRNYILDLMYQAIPEPRKEVSPYAPTVTTLRVLPDKIPIIIGPAGKNIKKIIEETKVKIDLDPEGLVKIYATSKEAAEKAVSMINELILDVEVGEVYMGKVTRVEDYGAFVELLPGRLSLLHVSQITGERLKSAKEKIKVGDVLKVKVSEIDDQGRIKVSLKDVPENVEPKNKFLFKEE.

2 residues coordinate Mg(2+): D486 and D492. Residues 553–612 (PTVTTLRVLPDKIPIIIGPAGKNIKKIIEETKVKIDLDPEGLVKIYATSKEAAEKAVSMI) enclose the KH domain. One can recognise an S1 motif domain in the interval 622 to 690 (GEVYMGKVTR…DQGRIKVSLK (69 aa)).

Belongs to the polyribonucleotide nucleotidyltransferase family. The cofactor is Mg(2+).

The protein localises to the cytoplasm. It carries out the reaction RNA(n+1) + phosphate = RNA(n) + a ribonucleoside 5'-diphosphate. In terms of biological role, involved in mRNA degradation. Catalyzes the phosphorolysis of single-stranded polyribonucleotides processively in the 3'- to 5'-direction. The protein is Polyribonucleotide nucleotidyltransferase of Sulfurihydrogenibium azorense (strain DSM 15241 / OCM 825 / Az-Fu1).